A 1550-amino-acid chain; its full sequence is Pentafunctional AROM polypeptide (1550 aa).

The 3-dehydroquinate synthase stretch occupies residues Met1–Lys379. NAD(+)-binding positions include Asp42–Asn44, Glu80–Lys83, Gly111–Val113, and Asp116. Arg127 provides a ligand contact to 7-phospho-2-dehydro-3-deoxy-D-arabino-heptonate. An NAD(+)-binding site is contributed by Thr136 to Thr137. 7-phospho-2-dehydro-3-deoxy-D-arabino-heptonate contacts are provided by Asp143 and Lys149. Lys158 provides a ligand contact to NAD(+). 7-phospho-2-dehydro-3-deoxy-D-arabino-heptonate is bound at residue Asn159. NAD(+) contacts are provided by residues Phe176–Thr179 and Asn187. A Zn(2+)-binding site is contributed by Glu191. 7-phospho-2-dehydro-3-deoxy-D-arabino-heptonate is bound by residues Glu191 to Lys194 and Lys243. The active-site Proton acceptor; for 3-dehydroquinate synthase activity is Glu253. 7-phospho-2-dehydro-3-deoxy-D-arabino-heptonate is bound by residues Arg257–Asn261 and His264. His264 contacts Zn(2+). His268 functions as the Proton acceptor; for 3-dehydroquinate synthase activity in the catalytic mechanism. The 7-phospho-2-dehydro-3-deoxy-D-arabino-heptonate site is built by His280 and Lys351. A Zn(2+)-binding site is contributed by His280. Residues Val392 to Ile837 are EPSP synthase. The tract at residues Asp857 to Val1047 is shikimate kinase. Gly864 to Ser871 lines the ATP pocket. Residues Leu1048–Glu1257 form a 3-dehydroquinase region. Arg1193 acts as the Schiff-base intermediate with substrate; for 3-dehydroquinate dehydratase activity in catalysis. A shikimate dehydrogenase region spans residues Ala1270–Glu1550.

This sequence in the N-terminal section; belongs to the sugar phosphate cyclases superfamily. Dehydroquinate synthase family. In the 2nd section; belongs to the EPSP synthase family. The protein in the 3rd section; belongs to the shikimate kinase family. It in the 4th section; belongs to the type-I 3-dehydroquinase family. This sequence in the C-terminal section; belongs to the shikimate dehydrogenase family. In terms of assembly, homodimer. Zn(2+) serves as cofactor.

It localises to the cytoplasm. It carries out the reaction 7-phospho-2-dehydro-3-deoxy-D-arabino-heptonate = 3-dehydroquinate + phosphate. It catalyses the reaction 3-dehydroquinate = 3-dehydroshikimate + H2O. The catalysed reaction is shikimate + NADP(+) = 3-dehydroshikimate + NADPH + H(+). The enzyme catalyses shikimate + ATP = 3-phosphoshikimate + ADP + H(+). It carries out the reaction 3-phosphoshikimate + phosphoenolpyruvate = 5-O-(1-carboxyvinyl)-3-phosphoshikimate + phosphate. It functions in the pathway metabolic intermediate biosynthesis; chorismate biosynthesis; chorismate from D-erythrose 4-phosphate and phosphoenolpyruvate: step 2/7. It participates in metabolic intermediate biosynthesis; chorismate biosynthesis; chorismate from D-erythrose 4-phosphate and phosphoenolpyruvate: step 3/7. Its pathway is metabolic intermediate biosynthesis; chorismate biosynthesis; chorismate from D-erythrose 4-phosphate and phosphoenolpyruvate: step 4/7. The protein operates within metabolic intermediate biosynthesis; chorismate biosynthesis; chorismate from D-erythrose 4-phosphate and phosphoenolpyruvate: step 5/7. It functions in the pathway metabolic intermediate biosynthesis; chorismate biosynthesis; chorismate from D-erythrose 4-phosphate and phosphoenolpyruvate: step 6/7. In terms of biological role, the AROM polypeptide catalyzes 5 consecutive enzymatic reactions in prechorismate polyaromatic amino acid biosynthesis. The polypeptide is Pentafunctional AROM polypeptide (Candida dubliniensis (strain CD36 / ATCC MYA-646 / CBS 7987 / NCPF 3949 / NRRL Y-17841) (Yeast)).